The sequence spans 135 residues: Class I hydrophobin dewB (135 aa).

A signal peptide spans 1-17; sequence MKFIGLATLSLFALASA. 4 disulfides stabilise this stretch: cysteine 35–cysteine 109, cysteine 43–cysteine 103, cysteine 44–cysteine 84, and cysteine 110–cysteine 128.

Belongs to the fungal hydrophobin family. In terms of assembly, self-assembles to form functional amyloid fibrils called rodlets. Self-assembly into fibrillar rodlets occurs spontaneously at hydrophobic:hydrophilic interfaces and the rodlets further associate laterally to form amphipathic monolayers.

Its subcellular location is the secreted. The protein resides in the spore wall. In terms of biological role, aerial growth, conidiation, and dispersal of filamentous fungi in the environment rely upon a capability of their secreting small amphipathic proteins called hydrophobins (HPBs) with low sequence identity. Class I can self-assemble into an outermost layer of rodlet bundles on aerial cell surfaces, conferring cellular hydrophobicity that supports fungal growth, development and dispersal; whereas Class II form highly ordered films at water-air interfaces through intermolecular interactions but contribute nothing to the rodlet structure. DewB is a class I hydrophobin that contributes to the hydrophobicity of the spore surface. The polypeptide is Class I hydrophobin dewB (Emericella nidulans (strain FGSC A4 / ATCC 38163 / CBS 112.46 / NRRL 194 / M139) (Aspergillus nidulans)).